The sequence spans 491 residues: Homeobox protein unplugged (491 aa).

Disordered regions lie at residues 1 to 23, 46 to 69, 124 to 146, and 227 to 329; these read MERP…TKTT, SASA…QEQE, AGKE…PLPH, and FSPA…RRTA. The segment covering 254–264 has biased composition (polar residues); it reads GDSSSDISLTL. The span at 305-316 shows a compositional bias: gly residues; sequence GLGGKDSQGNGS. Positions 323 to 382 form a DNA-binding region, homeobox; it reads SRRRRTAFTSEQLLELEREFHAKKYLSLTERSQIATSLKLSEVQVKIWFQNRRAKWKRVK.

The protein localises to the nucleus. Plays a regulatory role in neural branching of the tracheae: segment-specific aspects of these neural branching patterns appear to be generated by homeotic regulation of expression. This chain is Homeobox protein unplugged, found in Drosophila pseudoobscura pseudoobscura (Fruit fly).